The following is a 302-amino-acid chain: Oxygen-dependent coproporphyrinogen-III oxidase (302 aa).

S94 lines the substrate pocket. A divalent metal cation is bound by residues H98 and H108. H108 functions as the Proton donor in the catalytic mechanism. Residue 110–112 (NVR) coordinates substrate. A divalent metal cation is bound by residues H147 and H177. An important for dimerization region spans residues 242–277 (YVEFNLVYDRGTIFGLQSGGRTESILMSLPPLVRWD). Position 260–262 (260–262 (GGR)) interacts with substrate.

Belongs to the aerobic coproporphyrinogen-III oxidase family. As to quaternary structure, homodimer. It depends on a divalent metal cation as a cofactor.

The protein resides in the cytoplasm. It carries out the reaction coproporphyrinogen III + O2 + 2 H(+) = protoporphyrinogen IX + 2 CO2 + 2 H2O. It participates in porphyrin-containing compound metabolism; protoporphyrin-IX biosynthesis; protoporphyrinogen-IX from coproporphyrinogen-III (O2 route): step 1/1. Its function is as follows. Involved in the heme biosynthesis. Catalyzes the aerobic oxidative decarboxylation of propionate groups of rings A and B of coproporphyrinogen-III to yield the vinyl groups in protoporphyrinogen-IX. The sequence is that of Oxygen-dependent coproporphyrinogen-III oxidase from Alcanivorax borkumensis (strain ATCC 700651 / DSM 11573 / NCIMB 13689 / SK2).